The chain runs to 73 residues: Aldehyde dehydrogenase (73 aa).

It belongs to the aldehyde dehydrogenase family.

It catalyses the reaction an aldehyde + NAD(+) + H2O = a carboxylate + NADH + 2 H(+). It participates in alcohol metabolism; ethanol degradation; acetate from ethanol: step 2/2. The sequence is that of Aldehyde dehydrogenase from Geobacillus stearothermophilus (Bacillus stearothermophilus).